A 45-amino-acid polypeptide reads, in one-letter code: Cytochrome b559 subunit beta (45 aa).

The helical transmembrane segment at 20 to 36 (WIAVHTLAVPTVFFLGA) threads the bilayer. Position 24 (histidine 24) interacts with heme.

It belongs to the PsbE/PsbF family. In terms of assembly, heterodimer of an alpha subunit and a beta subunit. PSII is composed of 1 copy each of membrane proteins PsbA, PsbB, PsbC, PsbD, PsbE, PsbF, PsbH, PsbI, PsbJ, PsbK, PsbL, PsbM, PsbT, PsbX, PsbY, PsbZ, Psb30/Ycf12, peripheral proteins PsbO, CyanoQ (PsbQ), PsbU, PsbV and a large number of cofactors. It forms dimeric complexes. Requires heme b as cofactor.

The protein localises to the cellular thylakoid membrane. Its function is as follows. This b-type cytochrome is tightly associated with the reaction center of photosystem II (PSII). PSII is a light-driven water:plastoquinone oxidoreductase that uses light energy to abstract electrons from H(2)O, generating O(2) and a proton gradient subsequently used for ATP formation. It consists of a core antenna complex that captures photons, and an electron transfer chain that converts photonic excitation into a charge separation. In Nostoc sp. (strain PCC 7120 / SAG 25.82 / UTEX 2576), this protein is Cytochrome b559 subunit beta.